The sequence spans 579 residues: Arginine--tRNA ligase (579 aa).

Residues 127 to 137 (PNLAKEMHVGH) carry the 'HIGH' region motif.

Belongs to the class-I aminoacyl-tRNA synthetase family. In terms of assembly, monomer.

It is found in the cytoplasm. The catalysed reaction is tRNA(Arg) + L-arginine + ATP = L-arginyl-tRNA(Arg) + AMP + diphosphate. The sequence is that of Arginine--tRNA ligase from Stutzerimonas stutzeri (strain A1501) (Pseudomonas stutzeri).